Consider the following 107-residue polypeptide: U1-lycotoxin-Ls1a (107 aa).

A signal peptide spans 1-20 (MMKVLVVVALLVTLISYSSS). The propeptide occupies 21-41 (EGIDDLEADELLSLMANEQTR). 4 cysteine pairs are disulfide-bonded: C44/C59, C51/C68, C58/C86, and C70/C84.

The protein belongs to the neurotoxin 19 (CSTX) family. 04 (U1-Lctx) subfamily. As to expression, expressed by the venom gland.

Its subcellular location is the secreted. The chain is U1-lycotoxin-Ls1a from Lycosa singoriensis (Wolf spider).